The primary structure comprises 884 residues: Translation initiation factor IF-2 (884 aa).

The disordered stretch occupies residues V93 to Q288. Over residues E99–W209 the composition is skewed to basic and acidic residues. Polar residues predominate over residues Q216–H229. A compositionally biased stretch (basic and acidic residues) spans R231–R246. Positions S247–N261 are enriched in basic residues. Residues K262 to A275 show a composition bias toward basic and acidic residues. One can recognise a tr-type G domain in the interval H383–K552. The tract at residues G392–T399 is G1. G392–T399 contacts GTP. Residues G417–H421 are G2. A G3 region spans residues D438–G441. Residues D438–H442 and N492–D495 each bind GTP. The tract at residues N492–D495 is G4. Residues S528–K530 form a G5 region.

It belongs to the TRAFAC class translation factor GTPase superfamily. Classic translation factor GTPase family. IF-2 subfamily.

The protein localises to the cytoplasm. Functionally, one of the essential components for the initiation of protein synthesis. Protects formylmethionyl-tRNA from spontaneous hydrolysis and promotes its binding to the 30S ribosomal subunits. Also involved in the hydrolysis of GTP during the formation of the 70S ribosomal complex. The protein is Translation initiation factor IF-2 of Yersinia pestis bv. Antiqua (strain Antiqua).